The primary structure comprises 141 residues: UPF0310 protein SGO_1818 (141 aa).

Belongs to the UPF0310 family.

This chain is UPF0310 protein SGO_1818, found in Streptococcus gordonii (strain Challis / ATCC 35105 / BCRC 15272 / CH1 / DL1 / V288).